A 432-amino-acid polypeptide reads, in one-letter code: MKKITFIGAGSTIFAKNVLGDCLLTEALNGFEFALYDIDPKRLQESQLMLENLRDRYNPSVAINSYDDRKLALQNAGYVINAIQVGGYKPSTVIDFEIPKRYGLRQTIADTVGIGGIFRSLRTIPVLFDIAKDMEEMCPDAWFLNYTNPMATLTGAMLRYTNIKTIGLCHSVQVCTKDLFKALGMEHDGIEERIAGINHMAWLLEVKKDGTDLYPEIKRRAKEKQKTKHHDMVRFELMDKFGYYVTESSEHNAEYHPYFIKRNYPELISELQIPLDEYPRRCVKQIENWEKMRDDIVNNKNLTHERSKEYGSRIIEAMETNEPFTFGGNVLNTGLITNLPSKAVVEVTCVADRKKITPCFAGELPEQLAALNRTNINTQLMTIEAAVTRKKEAVYQAAMLDPHTSAELSMKDIISMCDDLFAAHGDWLPEYK.

2 to 68 (KKITFIGAGS…PSVAINSYDD (67 aa)) contacts NAD(+). Asparagine 148 contributes to the substrate binding site. Residue cysteine 169 coordinates Mn(2+). Histidine 170 acts as the Proton donor in catalysis. Histidine 199 contacts Mn(2+).

Belongs to the glycosyl hydrolase 4 family. As to quaternary structure, homodimer. Mn(2+) is required as a cofactor. The cofactor is NAD(+).

Its subcellular location is the cytoplasm. It carries out the reaction Hydrolysis of terminal, non-reducing alpha-D-galactose residues in alpha-D-galactosides, including galactose oligosaccharides, galactomannans and galactolipids.. Functionally, catalyzes the hydrolysis of melibiose and alpha-galactosides of the raffinose family of oligosaccharides (RFOs) such as raffinose and stachyose. Cannot act on polymeric substrates such as locust bean gum. The chain is Alpha-galactosidase from Bacillus subtilis (strain 168).